Here is a 700-residue protein sequence, read N- to C-terminus: Neoverrucotoxin subunit beta (700 aa).

Positions 506 to 700 (HMPGVETIKD…QKVNGQIKLL (195 aa)) constitute a B30.2/SPRY domain.

This sequence belongs to the SNTX/VTX toxin family. As to quaternary structure, heterodimer of alpha and beta subunits. In terms of processing, not glycosylated. Post-translationally, four intrachain disulfide linkages are present in the heterodimer. No interchain disulfide bound links the two subunits. As to expression, expressed by the venom gland.

It is found in the secreted. In terms of biological role, has hemolytic and lethal activities. Its hemolytic activity is inhibited by anionic lipids, especially potently by cardiolipin. This Synanceia verrucosa (Reef stonefish) protein is Neoverrucotoxin subunit beta.